The primary structure comprises 194 residues: dITP/XTP pyrophosphatase (194 aa).

Substrate is bound at residue 8 to 13 (TGNPGK). Mg(2+)-binding residues include E38 and D67. Residue D67 is the Proton acceptor of the active site. Residues S68, 146-149 (FGYD), K169, and 174-175 (HR) each bind substrate.

It belongs to the HAM1 NTPase family. As to quaternary structure, homodimer. Requires Mg(2+) as cofactor.

It carries out the reaction XTP + H2O = XMP + diphosphate + H(+). It catalyses the reaction dITP + H2O = dIMP + diphosphate + H(+). The catalysed reaction is ITP + H2O = IMP + diphosphate + H(+). Pyrophosphatase that catalyzes the hydrolysis of nucleoside triphosphates to their monophosphate derivatives, with a high preference for the non-canonical purine nucleotides XTP (xanthosine triphosphate), dITP (deoxyinosine triphosphate) and ITP. Seems to function as a house-cleaning enzyme that removes non-canonical purine nucleotides from the nucleotide pool, thus preventing their incorporation into DNA/RNA and avoiding chromosomal lesions. This is dITP/XTP pyrophosphatase from Synechocystis sp. (strain ATCC 27184 / PCC 6803 / Kazusa).